A 406-amino-acid polypeptide reads, in one-letter code: MKVGFFLLKFPLSSETFVLNQITAFIDMGFEVEILALQKGDTQNTHAAWTKYNLAARTRWLQDEPTGKVAKLRHRASQTLRGIHRKNTWQALNLKRYGAESRNLILSAICGQVATPFRADVFIAHFGPAGVTAAKLRELGVIRGKIATIFHGIDISSREVLNHYTPEYQQLFRRGDLMLPISDLWAGRLQKMGCPREKIAVSRMGVDMTRFSPRPVKAPATPLEIISVARLTEKKGLHVAIEACRQLKEQGVAFRYRILGIGPWERRLRTLIEQYQLEDVVEMPGFKPSHEVKAMLDDADVFLLPSVTGADGDMEGIPVALMEAMAVGIPVVSTLHSGIPELVEADKSGWLVPENDARALAQRLAAFSQLDTDELAPVVKRAREKVEHDFNQQVINRELASLLQAL.

Belongs to the glycosyltransferase group 1 family. Glycosyltransferase 4 subfamily.

Its pathway is slime biogenesis; slime polysaccharide biosynthesis. The protein is Putative colanic acid biosynthesis glycosyltransferase WcaL (wcaL) of Escherichia coli (strain K12).